The primary structure comprises 347 residues: Protein phosphatase 2C homolog 1 (347 aa).

A disordered region spans residues 1–41 (MKGSHPNAGSLLEPLHKLNPFSENSTSGHRKNASDHSADGE). Residues 32 to 41 (NASDHSADGE) are compositionally biased toward basic and acidic residues. Residues 71-323 (LAGLMEDKNQ…DNITCIVVNL (253 aa)) enclose the PPM-type phosphatase domain. Positions 109, 110, 275, and 314 each coordinate Mn(2+).

The protein belongs to the PP2C family. In terms of assembly, monomer. Mg(2+) is required as a cofactor. Requires Mn(2+) as cofactor.

The catalysed reaction is O-phospho-L-seryl-[protein] + H2O = L-seryl-[protein] + phosphate. The enzyme catalyses O-phospho-L-threonyl-[protein] + H2O = L-threonyl-[protein] + phosphate. Serine and threonine phosphatase. Has a specialized role in the heat shock response. May be responsible for the dephosphorylation of hsp90. The chain is Protein phosphatase 2C homolog 1 (ptc1) from Schizosaccharomyces pombe (strain 972 / ATCC 24843) (Fission yeast).